Reading from the N-terminus, the 184-residue chain is ATP synthase subunit b, chloroplastic (184 aa).

Residues leucine 27–leucine 49 form a helical membrane-spanning segment.

The protein belongs to the ATPase B chain family. As to quaternary structure, F-type ATPases have 2 components, F(1) - the catalytic core - and F(0) - the membrane proton channel. F(1) has five subunits: alpha(3), beta(3), gamma(1), delta(1), epsilon(1). F(0) has four main subunits: a(1), b(1), b'(1) and c(10-14). The alpha and beta chains form an alternating ring which encloses part of the gamma chain. F(1) is attached to F(0) by a central stalk formed by the gamma and epsilon chains, while a peripheral stalk is formed by the delta, b and b' chains.

It localises to the plastid. The protein localises to the chloroplast thylakoid membrane. In terms of biological role, f(1)F(0) ATP synthase produces ATP from ADP in the presence of a proton or sodium gradient. F-type ATPases consist of two structural domains, F(1) containing the extramembraneous catalytic core and F(0) containing the membrane proton channel, linked together by a central stalk and a peripheral stalk. During catalysis, ATP synthesis in the catalytic domain of F(1) is coupled via a rotary mechanism of the central stalk subunits to proton translocation. Component of the F(0) channel, it forms part of the peripheral stalk, linking F(1) to F(0). The polypeptide is ATP synthase subunit b, chloroplastic (Nicotiana tomentosiformis (Tobacco)).